Consider the following 231-residue polypeptide: Adenylate kinase (231 aa).

12–17 (GAGKGT) serves as a coordination point for ATP. Residues 32–61 (STGDMLRAAVKAKTPLGLEVKKIMESGGLV) are NMP. Residues Thr33, Arg38, 59–61 (GLV), 87–90 (GFPR), and Gln94 contribute to the AMP site. Residues 124-161 (GRLIHPASGRTYHRRYNPPKVADKDDVTGEPLIQRADD) are LID. ATP-binding positions include Arg125 and 134–135 (TY). Arg158 and Arg169 together coordinate AMP. Residue Gly205 participates in ATP binding.

The protein belongs to the adenylate kinase family. In terms of assembly, monomer.

The protein localises to the cytoplasm. The enzyme catalyses AMP + ATP = 2 ADP. The protein operates within purine metabolism; AMP biosynthesis via salvage pathway; AMP from ADP: step 1/1. Its function is as follows. Catalyzes the reversible transfer of the terminal phosphate group between ATP and AMP. Plays an important role in cellular energy homeostasis and in adenine nucleotide metabolism. This is Adenylate kinase from Coxiella burnetii (strain CbuK_Q154) (Coxiella burnetii (strain Q154)).